The primary structure comprises 230 residues: Cysteine S-methyltransferase OspZ (230 aa).

The segment at 49 to 52 (GITR) is interaction with host proteins TAB2, TAB3 and ZRANB3. Residues Ala92, Ser98, Arg107, Gln111, Tyr204, and Glu208 each coordinate S-adenosyl-L-methionine.

The protein belongs to the NleE/OspZ family. Monomer.

The protein resides in the secreted. The protein localises to the host cytoplasm. Its subcellular location is the host nucleus. It catalyses the reaction L-cysteinyl-[protein] + S-adenosyl-L-methionine = S-methyl-L-cysteinyl-[protein] + S-adenosyl-L-homocysteine + H(+). In terms of biological role, cysteine methyltransferase effector that inhibits host cell NF-kappa-B activation by preventing nuclear translocation of host protein RELA/p65. Acts by mediating cysteine methylation of host proteins TAB2 and TAB3: methylation of a conserved cysteine residue of the RanBP2-type zinc finger (NZF) of TAB2 and TAB3 disrupts zinc-binding, thereby inactivating the ubiquitin chain-binding activity of TAB2 and TAB3, leading to NF-kappa-B inactivation. Also mediates cysteine methylation of host protein ZRANB3, inactivating its ability to bind ubiquitin chains. The sequence is that of Cysteine S-methyltransferase OspZ from Shigella boydii.